The following is a 189-amino-acid chain: Molybdopterin synthase catalytic subunit (189 aa).

At Ser-20 the chain carries Phosphoserine. Substrate-binding positions include His-143–Arg-144, Lys-159, and Lys-166–Glu-168.

It belongs to the MoaE family. MOCS2B subfamily. As to quaternary structure, heterotetramer; composed of 2 small (MOCS2A) and 2 large (MOCS2B) subunits.

It localises to the cytoplasm. The protein resides in the cytosol. The enzyme catalyses 2 [molybdopterin-synthase sulfur-carrier protein]-C-terminal-Gly-aminoethanethioate + cyclic pyranopterin phosphate + H2O = molybdopterin + 2 [molybdopterin-synthase sulfur-carrier protein]-C-terminal Gly-Gly + 2 H(+). The protein operates within cofactor biosynthesis; molybdopterin biosynthesis. In terms of biological role, catalytic subunit of the molybdopterin synthase complex, a complex that catalyzes the conversion of precursor Z into molybdopterin. Acts by mediating the incorporation of 2 sulfur atoms from thiocarboxylated MOCS2A into precursor Z to generate a dithiolene group. The polypeptide is Molybdopterin synthase catalytic subunit (Bos taurus (Bovine)).